A 408-amino-acid polypeptide reads, in one-letter code: Chaperone protein dnaJ 1, mitochondrial (408 aa).

Residues 1–26 constitute a mitochondrion transit peptide; it reads MRRFNWVLRHVQARRTFDSAIGLRQG. Positions 48 to 113 constitute a J domain; sequence NYYDVLGVSP…ERREEYDKLQ (66 aa). The CR-type zinc-finger motif lies at 173-247; the sequence is GCTKRLSFDA…CRGSGIVEGT (75 aa). 8 residues coordinate Zn(2+): Cys-186, Cys-189, Cys-203, Cys-206, Cys-221, Cys-224, Cys-235, and Cys-238. CXXCXGXG motif repeat units follow at residues 186 to 193, 203 to 210, 221 to 228, and 235 to 242; these read CDSCDGLG, CPTCRGVG, CQTCKGTG, and CMSCRGSG.

Belongs to the DnaJ family. B/II subfamily. In terms of assembly, homodimer. Requires Zn(2+) as cofactor. As to expression, ubiquitous.

Its subcellular location is the mitochondrion. Its function is as follows. Plays a continuous role in plant development probably in the structural organization of compartments. This Arabidopsis thaliana (Mouse-ear cress) protein is Chaperone protein dnaJ 1, mitochondrial (ATJ1).